The sequence spans 71 residues: Small ribosomal subunit protein bS21 (71 aa).

It belongs to the bacterial ribosomal protein bS21 family.

The sequence is that of Small ribosomal subunit protein bS21 from Vesicomyosocius okutanii subsp. Calyptogena okutanii (strain HA).